The chain runs to 224 residues: Fibrillarin-like rRNA/tRNA 2'-O-methyltransferase (224 aa).

Residues 82–83 (TT), 100–101 (EF), 125–126 (DA), and 145–148 (DVAQ) each bind S-adenosyl-L-methionine.

This sequence belongs to the methyltransferase superfamily. Fibrillarin family. In terms of assembly, interacts with nop5. Component of box C/D small ribonucleoprotein (sRNP) particles that contain rpl7ae, FlpA and nop5, plus a guide RNA.

Its function is as follows. Involved in pre-rRNA and tRNA processing. Utilizes the methyl donor S-adenosyl-L-methionine to catalyze the site-specific 2'-hydroxyl methylation of ribose moieties in rRNA and tRNA. Site specificity is provided by a guide RNA that base pairs with the substrate. Methylation occurs at a characteristic distance from the sequence involved in base pairing with the guide RNA. This chain is Fibrillarin-like rRNA/tRNA 2'-O-methyltransferase, found in Methanothermobacter thermautotrophicus (strain ATCC 29096 / DSM 1053 / JCM 10044 / NBRC 100330 / Delta H) (Methanobacterium thermoautotrophicum).